Consider the following 115-residue polypeptide: NADH-ubiquinone oxidoreductase chain 3 (115 aa).

3 helical membrane passes run 4 to 24, 55 to 75, and 87 to 107; these read LLVL…AFWL, FFLV…LLPL, and MTLT…YEWL.

The protein belongs to the complex I subunit 3 family. As to quaternary structure, core subunit of respiratory chain NADH dehydrogenase (Complex I) which is composed of 45 different subunits. Interacts with TMEM186. Interacts with TMEM242.

The protein localises to the mitochondrion inner membrane. The enzyme catalyses a ubiquinone + NADH + 5 H(+)(in) = a ubiquinol + NAD(+) + 4 H(+)(out). Core subunit of the mitochondrial membrane respiratory chain NADH dehydrogenase (Complex I) which catalyzes electron transfer from NADH through the respiratory chain, using ubiquinone as an electron acceptor. Essential for the catalytic activity of complex I. This is NADH-ubiquinone oxidoreductase chain 3 from Peromyscus eremicus (Cactus mouse).